The chain runs to 184 residues: ATP synthase subunit b, chloroplastic (184 aa).

A helical membrane pass occupies residues 29–49; that stretch reads INLINLILVLGILFYYGKGVL.

It belongs to the ATPase B chain family. F-type ATPases have 2 components, F(1) - the catalytic core - and F(0) - the membrane proton channel. F(1) has five subunits: alpha(3), beta(3), gamma(1), delta(1), epsilon(1). F(0) has four main subunits: a(1), b(1), b'(1) and c(10-14). The alpha and beta chains form an alternating ring which encloses part of the gamma chain. F(1) is attached to F(0) by a central stalk formed by the gamma and epsilon chains, while a peripheral stalk is formed by the delta, b and b' chains.

The protein resides in the plastid. Its subcellular location is the chloroplast thylakoid membrane. In terms of biological role, f(1)F(0) ATP synthase produces ATP from ADP in the presence of a proton or sodium gradient. F-type ATPases consist of two structural domains, F(1) containing the extramembraneous catalytic core and F(0) containing the membrane proton channel, linked together by a central stalk and a peripheral stalk. During catalysis, ATP synthesis in the catalytic domain of F(1) is coupled via a rotary mechanism of the central stalk subunits to proton translocation. Its function is as follows. Component of the F(0) channel, it forms part of the peripheral stalk, linking F(1) to F(0). The chain is ATP synthase subunit b, chloroplastic from Adiantum capillus-veneris (Maidenhair fern).